Here is a 77-residue protein sequence, read N- to C-terminus: Sec-independent protein translocase protein TatA (77 aa).

The chain crosses the membrane as a helical span at residues 1-21; the sequence is MGSLSIWHWILVIAVVLLLFG. The span at 42-60 shows a compositional bias: basic and acidic residues; that stretch reads GMQDDDKPADKPEPAKSIE. The segment at 42 to 77 is disordered; it reads GMQDDDKPADKPEPAKSIEHNAAPTAARSDVGSKAV.

It belongs to the TatA/E family. The Tat system comprises two distinct complexes: a TatABC complex, containing multiple copies of TatA, TatB and TatC subunits, and a separate TatA complex, containing only TatA subunits. Substrates initially bind to the TatABC complex, which probably triggers association of the separate TatA complex to form the active translocon.

Its subcellular location is the cell inner membrane. Its function is as follows. Part of the twin-arginine translocation (Tat) system that transports large folded proteins containing a characteristic twin-arginine motif in their signal peptide across membranes. TatA could form the protein-conducting channel of the Tat system. This chain is Sec-independent protein translocase protein TatA, found in Bradyrhizobium diazoefficiens (strain JCM 10833 / BCRC 13528 / IAM 13628 / NBRC 14792 / USDA 110).